Consider the following 234-residue polypeptide: Endo-1,4-beta-xylanase 1 (234 aa).

An N-terminal signal peptide occupies residues 1–21 (MVSFIFTRIILFAAAINGAVA). N-linked (GlcNAc...) asparagine glycans are attached at residues N25 and N75. The 197-residue stretch at 38–234 (SGTPSSTGYS…SSGFSSITVA (197 aa)) folds into the GH11 domain. Catalysis depends on E124, which acts as the Nucleophile. An N-linked (GlcNAc...) asparagine glycan is attached at N167. E221 serves as the catalytic Proton donor.

The protein belongs to the glycosyl hydrolase 11 (cellulase G) family.

The protein resides in the secreted. It carries out the reaction Endohydrolysis of (1-&gt;4)-beta-D-xylosidic linkages in xylans.. It participates in glycan degradation; xylan degradation. Its function is as follows. Endo-1,4-beta-xylanase involved in the hydrolysis of xylan, a major structural heterogeneous polysaccharide found in plant biomass representing the second most abundant polysaccharide in the biosphere, after cellulose. The sequence is that of Endo-1,4-beta-xylanase 1 (Xyn1) from Leucoagaricus gongylophorus (Leaf-cutting ant fungus).